The sequence spans 123 residues: Fluoride-specific ion channel FluC (123 aa).

4 helical membrane passes run 4–24 (VYIA…SGWV), 31–51 (ALPY…GLLM), 64–83 (IRMG…STFS), and 100–120 (ANIL…IFLA). Na(+) contacts are provided by Gly-74 and Thr-77.

It belongs to the fluoride channel Fluc/FEX (TC 1.A.43) family.

It is found in the cell inner membrane. It carries out the reaction fluoride(in) = fluoride(out). With respect to regulation, na(+) is not transported, but it plays an essential structural role and its presence is essential for fluoride channel function. Its function is as follows. Fluoride-specific ion channel. Important for reducing fluoride concentration in the cell, thus reducing its toxicity. In Syntrophotalea carbinolica (strain DSM 2380 / NBRC 103641 / GraBd1) (Pelobacter carbinolicus), this protein is Fluoride-specific ion channel FluC.